Reading from the N-terminus, the 475-residue chain is Bifunctional protein HldE (475 aa).

Residues 1–318 are ribokinase; sequence MMQYSLKFNQ…ENAIHHREET (318 aa). 195–198 is an ATP binding site; that stretch reads NMAE. Asp264 is an active-site residue. The tract at residues 344–475 is cytidylyltransferase; it reads MTNGCFDILH…DVIKKIQAIR (132 aa).

This sequence in the N-terminal section; belongs to the carbohydrate kinase PfkB family. In the C-terminal section; belongs to the cytidylyltransferase family. Homodimer.

The catalysed reaction is D-glycero-beta-D-manno-heptose 7-phosphate + ATP = D-glycero-beta-D-manno-heptose 1,7-bisphosphate + ADP + H(+). It carries out the reaction D-glycero-beta-D-manno-heptose 1-phosphate + ATP + H(+) = ADP-D-glycero-beta-D-manno-heptose + diphosphate. The protein operates within nucleotide-sugar biosynthesis; ADP-L-glycero-beta-D-manno-heptose biosynthesis; ADP-L-glycero-beta-D-manno-heptose from D-glycero-beta-D-manno-heptose 7-phosphate: step 1/4. It participates in nucleotide-sugar biosynthesis; ADP-L-glycero-beta-D-manno-heptose biosynthesis; ADP-L-glycero-beta-D-manno-heptose from D-glycero-beta-D-manno-heptose 7-phosphate: step 3/4. It functions in the pathway bacterial outer membrane biogenesis; LOS core biosynthesis. Its function is as follows. Catalyzes the phosphorylation of D-glycero-D-manno-heptose 7-phosphate at the C-1 position to selectively form D-glycero-beta-D-manno-heptose-1,7-bisphosphate. Functionally, catalyzes the ADP transfer from ATP to D-glycero-beta-D-manno-heptose 1-phosphate, yielding ADP-D-glycero-beta-D-manno-heptose. This chain is Bifunctional protein HldE, found in Haemophilus ducreyi (strain 35000HP / ATCC 700724).